The sequence spans 202 residues: LexA repressor (202 aa).

Positions 28–48 (RAEIAQQLGFRSPNAAEEHLK) form a DNA-binding region, H-T-H motif. Catalysis depends on for autocatalytic cleavage activity residues S119 and K156.

This sequence belongs to the peptidase S24 family. Homodimer.

The enzyme catalyses Hydrolysis of Ala-|-Gly bond in repressor LexA.. In terms of biological role, represses a number of genes involved in the response to DNA damage (SOS response), including recA and lexA. In the presence of single-stranded DNA, RecA interacts with LexA causing an autocatalytic cleavage which disrupts the DNA-binding part of LexA, leading to derepression of the SOS regulon and eventually DNA repair. In Pectobacterium atrosepticum (strain SCRI 1043 / ATCC BAA-672) (Erwinia carotovora subsp. atroseptica), this protein is LexA repressor.